A 469-amino-acid polypeptide reads, in one-letter code: Putative dipeptidase SSP1012 (469 aa).

Position 84 (His84) interacts with Zn(2+). The active site involves Asp86. Zn(2+) is bound at residue Asp115. Glu149 serves as the catalytic Proton acceptor. Positions 150, 173, and 440 each coordinate Zn(2+).

This sequence belongs to the peptidase M20A family. Requires Zn(2+) as cofactor.

The protein is Putative dipeptidase SSP1012 of Staphylococcus saprophyticus subsp. saprophyticus (strain ATCC 15305 / DSM 20229 / NCIMB 8711 / NCTC 7292 / S-41).